The following is a 383-amino-acid chain: Acetylornithine deacetylase (383 aa).

H80 lines the Zn(2+) pocket. The active site involves D82. D112 serves as a coordination point for Zn(2+). The active site involves E144. Residues E145, E169, and H355 each contribute to the Zn(2+) site.

The protein belongs to the peptidase M20A family. ArgE subfamily. Homodimer. It depends on Zn(2+) as a cofactor. Requires Co(2+) as cofactor. Glutathione serves as cofactor.

Its subcellular location is the cytoplasm. It catalyses the reaction N(2)-acetyl-L-ornithine + H2O = L-ornithine + acetate. The protein operates within amino-acid biosynthesis; L-arginine biosynthesis; L-ornithine from N(2)-acetyl-L-ornithine (linear): step 1/1. Its function is as follows. Catalyzes the hydrolysis of the amide bond of N(2)-acetylated L-amino acids. Cleaves the acetyl group from N-acetyl-L-ornithine to form L-ornithine, an intermediate in L-arginine biosynthesis pathway, and a branchpoint in the synthesis of polyamines. This chain is Acetylornithine deacetylase, found in Shigella boydii serotype 18 (strain CDC 3083-94 / BS512).